The chain runs to 295 residues: MLILPIVKGEYKKDYNLKHLTWFKVGGNAEIFFKPLDREDLKSFLIQNKQKLPIKTFGAGSNIIIRDGGIEGVVIKLGQNFSNIEFIDNHLIVGSSCLNYNLAKFCQANAISGFEFLVGIPGTIGGGVAMNAGAYGSEFKDIIVQIEAIDFAGNFLTFTNEEIGFKYRSNNLPKNLIILKAVFKINKGDSENILLRMNEINNARSSTQPIKERTGGSTFANPAGRKSWELIDKVGLRGYRIGGASMSELHCNFMINNGDATAKDLEDLGDFVRQKVFEDSGVKLEWEIKRIGRHP.

An FAD-binding PCMH-type domain is found at 24-188 (KVGGNAEIFF…LKAVFKINKG (165 aa)). The active site involves arginine 168. Catalysis depends on serine 217, which acts as the Proton donor. Glutamate 287 is a catalytic residue.

The protein belongs to the MurB family. The cofactor is FAD.

Its subcellular location is the cytoplasm. The catalysed reaction is UDP-N-acetyl-alpha-D-muramate + NADP(+) = UDP-N-acetyl-3-O-(1-carboxyvinyl)-alpha-D-glucosamine + NADPH + H(+). It participates in cell wall biogenesis; peptidoglycan biosynthesis. Its function is as follows. Cell wall formation. In Rickettsia massiliae (strain Mtu5), this protein is UDP-N-acetylenolpyruvoylglucosamine reductase.